Consider the following 503-residue polypeptide: uncharacterized protein (503 aa).

The next 12 membrane-spanning stretches (helical) occupy residues 20 to 40 (FIAFAFNYVAGFGFISVVLTM), 43 to 63 (LGPFSYLILGLAALGILGVML), 106 to 126 (VSLTGPFNGLIVPAVLVLSFA), 138 to 158 (LIGLLVGGFVLFGALNFISLF), 166 to 186 (AILFFAIVKWVVVLGGLILGI), 215 to 235 (VISTTVGMLVAFAGTEDLTAI), 249 to 269 (LLMFGAVTLLYLIGFVIISGI), 301 to 321 (YLGIPLLVIFGLGFLLNSLAS), 359 to 379 (VWASNIMTLAVMVLMIIVPFL), 405 to 425 (LAVLISLIQYFITYIFFFMIL), 443 to 463 (GVSFAIITVLLFVNLFPITAW), and 468 to 488 (TFKLSILAAFFALGIGFFIHS).

The protein to M.genitalium MG225.

Its subcellular location is the cell membrane. This is an uncharacterized protein from Mycoplasma pneumoniae (strain ATCC 29342 / M129 / Subtype 1) (Mycoplasmoides pneumoniae).